Reading from the N-terminus, the 931-residue chain is DNA mismatch repair protein MutS (931 aa).

Over residues 1–10 (MMDDTAMPAR) the composition is skewed to low complexity. The segment at 1 to 34 (MMDDTAMPARAEADAAEDELAAPAGIDRTAKADK) is disordered. 674-681 (GPNMAGKS) contributes to the ATP binding site.

Belongs to the DNA mismatch repair MutS family.

Its function is as follows. This protein is involved in the repair of mismatches in DNA. It is possible that it carries out the mismatch recognition step. This protein has a weak ATPase activity. In Azorhizobium caulinodans (strain ATCC 43989 / DSM 5975 / JCM 20966 / LMG 6465 / NBRC 14845 / NCIMB 13405 / ORS 571), this protein is DNA mismatch repair protein MutS.